Consider the following 257-residue polypeptide: UPF0246 protein Daro_2893 (257 aa).

The protein belongs to the UPF0246 family.

The chain is UPF0246 protein Daro_2893 from Dechloromonas aromatica (strain RCB).